Here is a 476-residue protein sequence, read N- to C-terminus: PRAME family member 5 (476 aa).

The stretch at 97–124 (RWKLQVLDLQDVCENFWMVWSEAMAHGC) is one LRR 1; degenerate repeat. One copy of the LRR 2; degenerate repeat lies at 179-203 (HLCCKKLKILGMPFRNIRSILKMVN). The stretch at 204–230 (LDCIQEVEVNCKWVLPILTQFTPYLGH) is one LRR 3; degenerate repeat. Residues 231 to 266 (MRNLQKLVLSHMDVSRYVSPEQKKEIVTQFTTQFLK) form an LRR 4; degenerate repeat. LRR repeat units follow at residues 267–292 (LCCL…LSCL), 293–324 (KTSL…SQLK), 325–345 (TLDL…QILL), 349–376 (AATL…ALSR), and 377–401 (CFEL…LLSH).

The protein belongs to the PRAME family.

The polypeptide is PRAME family member 5 (Homo sapiens (Human)).